A 277-amino-acid chain; its full sequence is Sulfur carrier protein FdhD (277 aa).

The active-site Cysteine persulfide intermediate is Cys-121. Position 260 to 265 (260 to 265 (FCKPGR)) interacts with Mo-bis(molybdopterin guanine dinucleotide).

Belongs to the FdhD family.

The protein resides in the cytoplasm. In terms of biological role, required for formate dehydrogenase (FDH) activity. Acts as a sulfur carrier protein that transfers sulfur from IscS to the molybdenum cofactor prior to its insertion into FDH. The protein is Sulfur carrier protein FdhD of Escherichia coli O6:H1 (strain CFT073 / ATCC 700928 / UPEC).